A 309-amino-acid polypeptide reads, in one-letter code: Homoserine O-succinyltransferase (309 aa).

Cysteine 142 acts as the Acyl-thioester intermediate in catalysis. Substrate-binding residues include lysine 163 and serine 192. Histidine 235 acts as the Proton acceptor in catalysis. Residue glutamate 237 is part of the active site. Arginine 249 contacts substrate.

Belongs to the MetA family.

It is found in the cytoplasm. It catalyses the reaction L-homoserine + succinyl-CoA = O-succinyl-L-homoserine + CoA. Its pathway is amino-acid biosynthesis; L-methionine biosynthesis via de novo pathway; O-succinyl-L-homoserine from L-homoserine: step 1/1. Functionally, transfers a succinyl group from succinyl-CoA to L-homoserine, forming succinyl-L-homoserine. This chain is Homoserine O-succinyltransferase, found in Klebsiella pneumoniae subsp. pneumoniae (strain ATCC 700721 / MGH 78578).